A 127-amino-acid polypeptide reads, in one-letter code: MAYVKERIYESMFIIAPNVPEEEREKLVERVKGIIEERVKGKIDKVERMGMRKFAYEIKKFSEGDYTVIYFRCDGQHLQELENFYRITPEIIRWQTFRRFDLEKKERKAQSEKKEAEVSEGEGGTEA.

Positions 106–117 (ERKAQSEKKEAE) are enriched in basic and acidic residues. The segment at 106–127 (ERKAQSEKKEAEVSEGEGGTEA) is disordered. Over residues 118–127 (VSEGEGGTEA) the composition is skewed to acidic residues.

The protein belongs to the bacterial ribosomal protein bS6 family.

Functionally, binds together with bS18 to 16S ribosomal RNA. This chain is Small ribosomal subunit protein bS6, found in Thermotoga neapolitana (strain ATCC 49049 / DSM 4359 / NBRC 107923 / NS-E).